The sequence spans 61 residues: Phospholipase A2 (61 aa).

The Ca(2+) site is built by Tyr-27, Gly-29, and Gly-31. An intrachain disulfide couples Cys-28 to Cys-35. His-38 is a catalytic residue. Asp-39 provides a ligand contact to Ca(2+). Cysteines 41 and 59 form a disulfide. Residue Asp-60 is part of the active site.

Belongs to the phospholipase A2 family. Group II subfamily. D49 sub-subfamily. Homodimer. Ca(2+) is required as a cofactor. In terms of tissue distribution, expressed by the venom gland.

It localises to the secreted. The catalysed reaction is a 1,2-diacyl-sn-glycero-3-phosphocholine + H2O = a 1-acyl-sn-glycero-3-phosphocholine + a fatty acid + H(+). In terms of biological role, snake venom phospholipase A2 (PLA2) that displays edema-inducing activities. PLA2 catalyzes the calcium-dependent hydrolysis of the 2-acyl groups in 3-sn-phosphoglycerides. The polypeptide is Phospholipase A2 (Crotalus atrox (Western diamondback rattlesnake)).